The primary structure comprises 415 residues: L-cysteine:1D-myo-inositol 2-amino-2-deoxy-alpha-D-glucopyranoside ligase (415 aa).

C43 is a binding site for Zn(2+). Residues C43–T46, T58, and N81–T83 each bind L-cysteinyl-5'-AMP. The short motif at I45–H55 is the 'HIGH' region element. Positions E188–P193 match the 'ERGGDP' region motif. Residue W229 coordinates L-cysteinyl-5'-AMP. Residue C233 participates in Zn(2+) binding. G251–D253 contacts L-cysteinyl-5'-AMP. H258 is a Zn(2+) binding site. V285 contacts L-cysteinyl-5'-AMP. Residues K291 to S295 carry the 'KMSKS' region motif.

Belongs to the class-I aminoacyl-tRNA synthetase family. MshC subfamily. In terms of assembly, monomer. Zn(2+) is required as a cofactor.

It catalyses the reaction 1D-myo-inositol 2-amino-2-deoxy-alpha-D-glucopyranoside + L-cysteine + ATP = 1D-myo-inositol 2-(L-cysteinylamino)-2-deoxy-alpha-D-glucopyranoside + AMP + diphosphate + H(+). Functionally, catalyzes the ATP-dependent condensation of GlcN-Ins and L-cysteine to form L-Cys-GlcN-Ins. The chain is L-cysteine:1D-myo-inositol 2-amino-2-deoxy-alpha-D-glucopyranoside ligase from Cellulomonas flavigena (strain ATCC 482 / DSM 20109 / BCRC 11376 / JCM 18109 / NBRC 3775 / NCIMB 8073 / NRS 134).